A 533-amino-acid chain; its full sequence is Bifunctional purine biosynthesis protein PurH (533 aa).

One can recognise an MGS-like domain in the interval 1 to 148 (MDTPRPIKRA…KNHKDVTIVV (148 aa)).

The protein belongs to the PurH family.

It carries out the reaction (6R)-10-formyltetrahydrofolate + 5-amino-1-(5-phospho-beta-D-ribosyl)imidazole-4-carboxamide = 5-formamido-1-(5-phospho-D-ribosyl)imidazole-4-carboxamide + (6S)-5,6,7,8-tetrahydrofolate. The enzyme catalyses IMP + H2O = 5-formamido-1-(5-phospho-D-ribosyl)imidazole-4-carboxamide. It participates in purine metabolism; IMP biosynthesis via de novo pathway; 5-formamido-1-(5-phospho-D-ribosyl)imidazole-4-carboxamide from 5-amino-1-(5-phospho-D-ribosyl)imidazole-4-carboxamide (10-formyl THF route): step 1/1. Its pathway is purine metabolism; IMP biosynthesis via de novo pathway; IMP from 5-formamido-1-(5-phospho-D-ribosyl)imidazole-4-carboxamide: step 1/1. The sequence is that of Bifunctional purine biosynthesis protein PurH from Colwellia psychrerythraea (strain 34H / ATCC BAA-681) (Vibrio psychroerythus).